We begin with the raw amino-acid sequence, 380 residues long: MSEATLLSYTKKLLASPPQLSSTDLHDALLVILSLLQKCDTNSDESLSIYTKVSSFLTALRVTKLDHKAEYIAEAAKAVLRHSDLVDLPLPKKDELHPEDGPVILDIVGTGGDGQNTFNVSTSAAIVASGIQGLKICKHGGKASTSNSGAGDLIGTLGCDMFKVNSSTVPKLWPDNTFMFLLAPFFHHGMGHVSKIRKFLGIPTVFNVLGPLLHPVSHVNKRILGVYSKELAPEYAKAAALVYPGSETFIVWGHVGLDEVSPIGKTTVWHIDPTSSELKLKTFQLEPSMFGLEEHELSKCASYGPKENARILKEEVLSGKYHLGDNNPIYDYILMNTAVLYCLSQGHQNWKEGIIKAEESIHSGNALRSLEHFIDSVSSL.

5-phospho-alpha-D-ribose 1-diphosphate contacts are provided by glycine 109, asparagine 119, serine 121, threonine 122, lysine 142, serine 144, and serine 146. Residues aspartate 258 and glutamate 259 each coordinate Mg(2+).

It belongs to the anthranilate phosphoribosyltransferase family. Homodimer. The cofactor is Mg(2+).

It carries out the reaction N-(5-phospho-beta-D-ribosyl)anthranilate + diphosphate = 5-phospho-alpha-D-ribose 1-diphosphate + anthranilate. It participates in amino-acid biosynthesis; L-tryptophan biosynthesis; L-tryptophan from chorismate: step 2/5. In terms of biological role, catalyzes the transfer of the phosphoribosyl group of 5-phosphorylribose-1-pyrophosphate (PRPP) to anthranilate to yield N-(5'-phosphoribosyl)-anthranilate (PRA), the second step in tryptophan biosynthesis. The polypeptide is Anthranilate phosphoribosyltransferase (Saccharomyces cerevisiae (strain ATCC 204508 / S288c) (Baker's yeast)).